Consider the following 436-residue polypeptide: Protein disulfide-isomerase (436 aa).

One can recognise a Thioredoxin domain in the interval 216–365; it reads FLAGKIDPSI…VEDATESAKA (150 aa). Residues Cys266 and Cys269 each act as nucleophile in the active site. The cysteines at positions 266 and 269 are disulfide-linked. Residues 328–436 form a disordered region; sequence TLVPHCRGSR…ASASSVKDEL (109 aa). Basic residues predominate over residues 334-343; that stretch reads RGSRPVHRRE. 2 stretches are compositionally biased toward low complexity: residues 362 to 377 and 385 to 436; these read SAKA…AASA and VKSG…KDEL. The short motif at 433–436 is the Prevents secretion from ER element; sequence KDEL.

Belongs to the protein disulfide isomerase family.

The protein localises to the endoplasmic reticulum lumen. The catalysed reaction is Catalyzes the rearrangement of -S-S- bonds in proteins.. In terms of biological role, participates in the folding of proteins containing disulfide bonds, may be involved in glycosylation, prolyl hydroxylation and triglyceride transfer. This chain is Protein disulfide-isomerase, found in Alternaria alternata (Alternaria rot fungus).